The sequence spans 386 residues: S-adenosylmethionine synthase (386 aa).

Residue His16 coordinates ATP. Asp18 lines the Mg(2+) pocket. Residue Glu44 participates in K(+) binding. L-methionine-binding residues include Glu57 and Gln100. A flexible loop region spans residues 100–110 (QSRDITQGVDR). ATP is bound by residues 165–167 (DAK), Asp240, 246–247 (RK), Ala263, and Lys267. An L-methionine-binding site is contributed by Asp240. Lys271 lines the L-methionine pocket.

Belongs to the AdoMet synthase family. Homotetramer; dimer of dimers. The cofactor is Mg(2+). Requires K(+) as cofactor.

It localises to the cytoplasm. It carries out the reaction L-methionine + ATP + H2O = S-adenosyl-L-methionine + phosphate + diphosphate. It participates in amino-acid biosynthesis; S-adenosyl-L-methionine biosynthesis; S-adenosyl-L-methionine from L-methionine: step 1/1. Functionally, catalyzes the formation of S-adenosylmethionine (AdoMet) from methionine and ATP. The overall synthetic reaction is composed of two sequential steps, AdoMet formation and the subsequent tripolyphosphate hydrolysis which occurs prior to release of AdoMet from the enzyme. This Francisella tularensis subsp. tularensis (strain FSC 198) protein is S-adenosylmethionine synthase.